We begin with the raw amino-acid sequence, 3999 residues long: MSGQDPVKESGQREPIAVVGSGFRFPGSSNNPSKLWDLLVKPRDLLTKIPENRFNSDAFYHPKPFHHGTSDVRESYFLEEDHRQFDAAFFNIKPVEVHAIDPQQRILMEAVYESLEAAGLSMESLAGSRTGVYVGLMCADYVDLLNNDVNSLPTYTPTGTARSIMSNRISYFFDWHGPSMTIDTACSSSLVAVHQAVQLLRSGDSDVAVAAGANLMLGPLPYIAESKLQMLSSNSRSRMWDIDASGYARGEGVAAVVLKRLSSAIADGDQIECIIRESGINQDGRTKGITMPSSVAQADLISRTYAKAGLNPRDPTERCQYFEAHGTGTAAGDPKEAEAISKAFFHPGEDISGKTDPLYVGSIKTVIGHTEGTAGLAGLLKASLAVQHGIVPPNLLFNQLSPAVEPFYTNLEVLTSPRPWPKLAEGTPRRASINSFGFGGTNAHCIIENYIPSPAHTDRAITTRQFTPFNFSAASEKSLRGILTDYSNYLRLNPEVSLQDLSYTLYARRSEHAVRVHISAGSTTDLYTRIDDLLQVPSSGGNAQSIGTRSKILSRPVRALGVFTGQGAQWPSMGRELVLNSPYAKEVVQKLDLVLQSLPEPERPDWSLMYELTCDASQSRLNTAVIAQPLCTVVQIILFDLLSSAGVKLQAVVGHSSGEIAAAYAAGYLTREDALKIAYYRGYFTNLTPSDRPGAMMAIGTSAEDAEELCSLPMFQGRLAVAAVNSSSSVTISGDRDAIEQAKEVLEDEKKFARLLKVDKAYHSSHMVPCAEGYLEALKNSEIHPLSGTDDCVWHSSTHKNKYSHGDGALAGQYWADNMIQPVLFSHAVEAAASAGDAFDIAIEVGPHPALKGPALQTLQEVQKDTIPYTGLLNRGKDDIEALSDALGYLWTQFTPSLIDFRGFDLLASGGEQRSLIRNLPTYHWDHDKIFWHKSRAVKAFLGQKNIPNPLLGSRTTDVMEQEIRWRNLLRLSELPWVRGHQLQGQVIYPATAYISTAVEAARFLVPKGDNIALIEVEDFSLGKPLVFAEDAAGIETVFTLSDIAKENDTTYSASFIYHASTNAETEQLSTHAIGRVIVITGETSSHWLPSRQKDLPNLVDIPEDRFYASLEPLGYAYSGYFKTMSSIKRRLNFSSTKIRVPPQDDEPEKMLLHPALLDTALQGIFLAYCWPGDGSLEQLHVPTGIKNFRVNVGLCQQVLTPETDVSSCTQLTGNPLATKHLNGDVEIYADDGAGLVQMEGLRVVAFAEQTEDADRAIFSEHVWDVLAPNCERAMGGKRATLQDYEFAYGMERVVVYYMKQLVTLFPESLRKIMNLEWHFECMFAFFTDVLTTLEAGERRTARREWLQDTAADVEGIKARYAHTVDMQLTCAVGDNLPAVLRGESTILQHLTKDNLLNRFYEVGLGLKEVSGYLGKIVEQVVHRHPRMKILEIGKSGTGGATKVIMRGIGRSFSSYTYTDISPNFFESAQEVFSAVADKMIFKTLDVEKDITEQSFEEHSYDLVVASLVLHATTNLKRTLTNARRLLKPGGYLIFQEICDNDIARVGFLICAVPGWWLGQDDGRKLSPCVSTSEWHNLLLETGFSGADSPMPEYDAAPYPLAVIVSQAVDDRIALLREPLSLVQNDASVGEPWDLVLVGGQTSKTAMIIEQISGLITSSGVTHSVFKTIDEVDGTRISPTTAILCLADLDEPVFKGLSSTTLEGLQRLFETQRTVLWITQGCRSEDPWMNMSVGLGRTLVLENPDLALQFLDLEPGVEPNPRQLLEVLLRLRQSDIWEKEGKFDDVLWTNEHELAYDKGDLTLSRVHLSGALNDRYNAAKRTVLEAKNPQETPLNLSLGPSLKQFLVLDDVLVAKTLSSWELKDDSETLIKVTHSLLMPALAAPTPLYLILGTINKTKKSVLSIADNNGSYALVASNKVLAIDVPAGQESQLLSLFNTRLQVDSMLSLCESDSTLLIHEPSPDLASAIAACGSSGKINVVFTTSTSSGDSTWTRIDAYSTQRAIRSLLPENVSVFIDCSAGSQSRRTASLIASCLLPSCFQTTISGVQSLQRIRGLSPTDLCQKLNDALAWASKELAAPSNPGTLPSIKLETLIDDSAVASTTQAVVDWSTATSVPVQVSTVDNHVTFKGNNTYVLFGLTSDLAQSICDWMVSRGARNIVLTSRNPKIDSNWIELLKGAGVRLEAFANDITNKDALSSLVHHIRKNFPPIAGVAHGAMVLDDVSFFEMPYEKMTKVLGPKVQGAILLDEIFQDTSLDFFVFFSSVTAIAGNRGQSAYTSANMFMTSLASQRRDKGLAASILHLGAVMGVGYINRGFSDAFFTTLRRAGFMMMSERGLHLLFGEAVLASNPHSGRNPEVITALELSRLGDKPPLWTKFPRFQHCLQADDGANKRAKKKTAAVSTKLKLAEATTAEEILEIVQDAFYLKLQVALQIPDETDKSQVLASGTDDLGIDSLVAVEIRSWFLKELETEIPVFKVLSGGSVTQLVEYAIGSMPAELTPNRADSAKASEPEPEAPATLMPPPDSVSSSPSSLPKTSASGSSQQMSEGSSKTSEQGDAQDKKEESPSESVNDISELTYEKVLPVSPGQSRFWFLKHLLEDQTTANNTIWVSIQGTIRLNDLEMAIRKVAARHEALRTSFFMDENQKPIQAISETSRLYLEKKTLSSGSQAEREFEGLKKHVYDIEHGECMRLVYLEVTDTESYLLIGSHHIIMDGISLEVFLKDIEKAYNGQSLSNQVYQYSDYSEKLRQELEQGTMQEEINYWKSEFADVPSPLPLLPFAAEKQRKSLAAYSHTSVSRLVDPRVARQISNTCHKLKANVFHFYLGVFEVLLFKLFGNNDVCIGMADANRWNEKVSQSIGMYLNLLPLRFHLDGRQSFEAMLKDTRRKAYLAMSNSRLPFDVLLDNVICERSSAFSPLFQAFINYRQGVNEKRVLGNATGATKELSLPRAGYDISLDIIENPGNDTRVTVMLQKALYSDNESSRVLDLYFKLLNDLSSSSKKMLEEVSLFTEQEISNSIQLGQGPVLPSQWPETLVHRIDAMIAVHTDKVALKEITGKSWTYLQLEEEINRVSSVLIQANVTSGSTVAIYQEASPNFVFSLLAVLRIGAIYVPLDCNLPEGRLRLVLAECKPSALLADGKTLSQIGSLGLSPSVTILDVSRLPAASASISPVFTKAANPAAILFTSGSTGVPKGVVLSHGSLRNHVEALVHTHGFGSETVLQQSSVGFDMSMNQVFMALANGGSLVIVPESLRKDSSAIAKILLEQNITYTSATPSEYFAWLRHGSDDLLRNKSWKYATAGGEKFTPKLLQAFQKLKSAFSHSFHAFNAYGPTECSMSSNELEVNLDGHSAQFITAGRALPNYAVYIVDENATPQTIEIPGEICIAGAGVALEYLNNPVETAKKFLKDPFASVSAIERGWNRMYRTGDKGVLRPDGTLEILGRIEGDTQIKLRGLRIEMQDIEQSILKAGEGRVKEAIVTPRGDPTILVAHAVVSPIVSIDNEREYLRGLAASLPLPQYMRPAAIIPIATMPLNASGKIDRRALQNLDIPSTLQQKTRSKRKLTDTESKLAQIWVEVLPQQLQEVYAIDETSDFFQVGGNSMLLIELRELVKKRFQVHLPLLRFFEHSTLGAMAAAIQDTSPGEKLEINWDVETEVPSAYSELNTQEPAQSHSSHKTIVLTGATGFLGKYLLNLLTEAPDVDKIHCIAIRNREKLANFTNSAKVVIHDGDLASPRCGLSEADATSVFGSANVIIHNGADVSFLKTYSSLRASNVLSTKELVKLALPHHIPIHYISTATVGKLNKSDSLAPESLAQYPPGPSFVDGYAASKWASEVFLEKTTRQFGLPTFIHRPSSITGDGAGENDIVPSVLKYSAMIKALPDSSKWTGYIDLITVEKAAAGIADSVLQGRLVNVTATEAEYLHHAGEKVIPAQSIKTILTADDGPQWESVSMKNWVEKAIQNGMNPLVGEFLLSIDKGQGMQIGQKLLSKTDGSKNEF.

A Ketosynthase family 3 (KS3) domain is found at 13-449 (REPIAVVGSG…GTNAHCIIEN (437 aa)). Active-site for beta-ketoacyl synthase activity residues include C186, H325, and H369. The Malonyl-CoA:ACP transacylase (MAT) domain occupies 562 to 879 (VFTGQGAQWP…TGLLNRGKDD (318 aa)). The segment at 949 to 1084 (NPLLGSRTTD…GRVIVITGET (136 aa)) is N-terminal hotdog fold. The 305-residue stretch at 949-1253 (NPLLGSRTTD…VVAFAEQTED (305 aa)) folds into the PKS/mFAS DH domain. Positions 950–1252 (PLLGSRTTDV…RVVAFAEQTE (303 aa)) are dehydratase (DH) domain. H981 serves as the catalytic Proton acceptor; for dehydratase activity. Residues 1099–1253 (LVDIPEDRFY…VVAFAEQTED (155 aa)) are C-terminal hotdog fold. D1159 functions as the Proton donor; for dehydratase activity in the catalytic mechanism. The methyltransferase (cMeT) domain stretch occupies residues 1298–1593 (YMKQLVTLFP…FSGADSPMPE (296 aa)). Residues 2133-2306 (TYVLFGLTSD…AASILHLGAV (174 aa)) form the Ketoreductase (KR) domain. Positions 2414 to 2495 (EEILEIVQDA…QLVEYAIGSM (82 aa)) constitute a Carrier 1 domain. The residue at position 2455 (S2455) is an O-(pantetheine 4'-phosphoryl)serine. The interval 2501-2573 (PNRADSAKAS…EESPSESVND (73 aa)) is disordered. The span at 2526-2554 (SVSSSPSSLPKTSASGSSQQMSEGSSKTS) shows a compositional bias: low complexity. Residues 2580–3015 (EKVLPVSPGQ…EEVSLFTEQE (436 aa)) form a condensation region. An adenylation region spans residues 3045 to 3453 (AVHTDKVALK…RIEGDTQIKL (409 aa)). The Carrier 2 domain occupies 3562 to 3642 (RKLTDTESKL…AMAAAIQDTS (81 aa)). S3602 carries the post-translational modification O-(pantetheine 4'-phosphoryl)serine. The tract at residues 3681 to 3900 (LTGATGFLGK…IDLITVEKAA (220 aa)) is reductase-like (R) domain (R).

This sequence in the C-terminal section; belongs to the NRP synthetase family.

Its pathway is mycotoxin biosynthesis. In terms of biological role, hybrid PKS-NRPS synthetase; part of the gene cluster that mediates the biosynthesis of xenoacremones such as xenoacremone A, a compound that shows inhibitory activity toward the PI3K/AKT signaling pathway and which has the ability to induce apoptosis of A549 lung cancer cells. Within the pathway, cooperation of the hybrid PKS-NRPS xenE and the trans-acting enoyl reductase xenG is responsible for the formation of the reduced tyrosine-nonaketide derivative. The PKS module of xenE acted in combination with the trans-acting enoyl reductase xenG to produce a double-methylated nonaketide attached to the ACP domain. In parallel, the adenylation (A) domain of the NRPS module activated L-tyrosine, which was then transferred to the ACP domain. The condensation (C) domain subsequently linked this group to the polyketide chain, forming an enzyme-bound amide. Reductive release by the C-terminal R domain afforded the aldehyde derivative. The alpha/beta hydrolase xenA then accelerates intramolecular nucleophilic attack to give a pyrrolidone derivative. Subsequently, three enzymes, xenF, xenD, and xenC, coordinately participate in the conversion to xenoacremone B. XenF catalyzes sigmatropic rearrangement to form an A-ring, which leads to an unusual intermediate with a hexane ring, which is required for the formation of the tricarbocyclic product. Epoxidation catalyzed by xenD and the formation of the paracyclophane ether catalyzed by xenC initiate a spontaneous intramolecular Diels-Alder (IMDA) reaction to yield xenoacremone B. Spontaneous hydration of xenoacremone B leads to the formation of xenoacremone A, which undergoes subsequent methylation to afford xenoacremone C. This chain is Hybrid PKS-NRPS synthetase xenE, found in Xenoacremonium sinensis (Endophyte fungus).